A 171-amino-acid polypeptide reads, in one-letter code: N5-carboxyaminoimidazole ribonucleotide mutase (171 aa).

Positions 10, 13, and 40 each coordinate substrate.

It belongs to the AIR carboxylase family. Class I subfamily.

It catalyses the reaction 5-carboxyamino-1-(5-phospho-D-ribosyl)imidazole + H(+) = 5-amino-1-(5-phospho-D-ribosyl)imidazole-4-carboxylate. It participates in purine metabolism; IMP biosynthesis via de novo pathway; 5-amino-1-(5-phospho-D-ribosyl)imidazole-4-carboxylate from 5-amino-1-(5-phospho-D-ribosyl)imidazole (N5-CAIR route): step 2/2. Its function is as follows. Catalyzes the conversion of N5-carboxyaminoimidazole ribonucleotide (N5-CAIR) to 4-carboxy-5-aminoimidazole ribonucleotide (CAIR). This chain is N5-carboxyaminoimidazole ribonucleotide mutase, found in Thermotoga maritima (strain ATCC 43589 / DSM 3109 / JCM 10099 / NBRC 100826 / MSB8).